Reading from the N-terminus, the 674-residue chain is ATP-dependent DNA helicase Rep (674 aa).

In terms of domain architecture, UvrD-like helicase ATP-binding spans 1–280 (MRLNPGQQHA…IKLEQNYRSS (280 aa)). Residues 22 to 29 (AGAGSGKT) and arginine 278 each bind ATP. Residues 281–562 (GRILKAANIL…QLMTLHASKG (282 aa)) form the UvrD-like helicase C-terminal domain.

Belongs to the helicase family. UvrD subfamily. In terms of assembly, homodimer.

The enzyme catalyses Couples ATP hydrolysis with the unwinding of duplex DNA by translocating in the 3'-5' direction.. It carries out the reaction ATP + H2O = ADP + phosphate + H(+). In terms of biological role, rep helicase is a single-stranded DNA-dependent ATPase involved in DNA replication; it can initiate unwinding at a nick in the DNA. It binds to the single-stranded DNA and acts in a progressive fashion along the DNA in the 3' to 5' direction. The chain is ATP-dependent DNA helicase Rep from Salmonella typhimurium (strain LT2 / SGSC1412 / ATCC 700720).